Reading from the N-terminus, the 510-residue chain is D-alanine--D-alanyl carrier protein ligase (510 aa).

Residue 157 to 158 (TS) coordinates ATP. Residue aspartate 202 coordinates D-alanine. 297-302 (NTYGPT) contributes to the ATP binding site. D-alanine is bound at residue valine 306. ATP is bound by residues aspartate 389 and lysine 498. D-alanine is bound at residue lysine 498.

Belongs to the ATP-dependent AMP-binding enzyme family. DltA subfamily.

It localises to the cytoplasm. It carries out the reaction holo-[D-alanyl-carrier protein] + D-alanine + ATP = D-alanyl-[D-alanyl-carrier protein] + AMP + diphosphate. It functions in the pathway cell wall biogenesis; lipoteichoic acid biosynthesis. In terms of biological role, catalyzes the first step in the D-alanylation of lipoteichoic acid (LTA), the activation of D-alanine and its transfer onto the D-alanyl carrier protein (Dcp) DltC. In an ATP-dependent two-step reaction, forms a high energy D-alanyl-AMP intermediate, followed by transfer of the D-alanyl residue as a thiol ester to the phosphopantheinyl prosthetic group of the Dcp. D-alanylation of LTA plays an important role in modulating the properties of the cell wall in Gram-positive bacteria, influencing the net charge of the cell wall. The polypeptide is D-alanine--D-alanyl carrier protein ligase (Listeria monocytogenes serovar 1/2a (strain ATCC BAA-679 / EGD-e)).